Here is a 94-residue protein sequence, read N- to C-terminus: Pyrimidine/purine nucleoside phosphorylase 2 (94 aa).

Belongs to the nucleoside phosphorylase PpnP family.

The catalysed reaction is a purine D-ribonucleoside + phosphate = a purine nucleobase + alpha-D-ribose 1-phosphate. It catalyses the reaction adenosine + phosphate = alpha-D-ribose 1-phosphate + adenine. The enzyme catalyses cytidine + phosphate = cytosine + alpha-D-ribose 1-phosphate. It carries out the reaction guanosine + phosphate = alpha-D-ribose 1-phosphate + guanine. The catalysed reaction is inosine + phosphate = alpha-D-ribose 1-phosphate + hypoxanthine. It catalyses the reaction thymidine + phosphate = 2-deoxy-alpha-D-ribose 1-phosphate + thymine. The enzyme catalyses uridine + phosphate = alpha-D-ribose 1-phosphate + uracil. It carries out the reaction xanthosine + phosphate = alpha-D-ribose 1-phosphate + xanthine. In terms of biological role, catalyzes the phosphorolysis of diverse nucleosides, yielding D-ribose 1-phosphate and the respective free bases. Can use uridine, adenosine, guanosine, cytidine, thymidine, inosine and xanthosine as substrates. Also catalyzes the reverse reactions. The chain is Pyrimidine/purine nucleoside phosphorylase 2 from Psychrobacter cryohalolentis (strain ATCC BAA-1226 / DSM 17306 / VKM B-2378 / K5).